A 177-amino-acid chain; its full sequence is uncharacterized protein (177 aa).

To B.subtilis YutG.

This is an uncharacterized protein from Bacillus subtilis (strain 168).